We begin with the raw amino-acid sequence, 298 residues long: UDP-N-acetylenolpyruvoylglucosamine reductase (298 aa).

An FAD-binding PCMH-type domain is found at 27–191 (TGGEADVFVM…LDATFSLALE (165 aa)). Arg170 is an active-site residue. Ser220 functions as the Proton donor in the catalytic mechanism. Glu290 is an active-site residue.

Belongs to the MurB family. It depends on FAD as a cofactor.

The protein resides in the cytoplasm. It catalyses the reaction UDP-N-acetyl-alpha-D-muramate + NADP(+) = UDP-N-acetyl-3-O-(1-carboxyvinyl)-alpha-D-glucosamine + NADPH + H(+). It participates in cell wall biogenesis; peptidoglycan biosynthesis. Its function is as follows. Cell wall formation. The protein is UDP-N-acetylenolpyruvoylglucosamine reductase of Listeria monocytogenes serotype 4a (strain HCC23).